The primary structure comprises 135 residues: Protein PsiE homolog (135 aa).

Transmembrane regions (helical) follow at residues 14–34 (LQTI…IFLV), 54–74 (YQLI…ALIV), 82–102 (HFPL…LIIV), and 107–127 (PSDT…LYLA).

The protein belongs to the PsiE family.

It localises to the cell inner membrane. The protein is Protein PsiE homolog of Pectobacterium atrosepticum (strain SCRI 1043 / ATCC BAA-672) (Erwinia carotovora subsp. atroseptica).